Here is a 667-residue protein sequence, read N- to C-terminus: DNA ligase (667 aa).

Residues Asp-32–Asp-36, Ser-81–Leu-82, and Glu-110 contribute to the NAD(+) site. Lys-112 (N6-AMP-lysine intermediate) is an active-site residue. Residues Arg-133, Glu-167, Lys-283, and Lys-307 each contribute to the NAD(+) site. The Zn(2+) site is built by Cys-401, Cys-404, Cys-419, and Cys-424. The region spanning Glu-586–Ser-667 is the BRCT domain.

This sequence belongs to the NAD-dependent DNA ligase family. LigA subfamily. The cofactor is Mg(2+). Mn(2+) is required as a cofactor.

It carries out the reaction NAD(+) + (deoxyribonucleotide)n-3'-hydroxyl + 5'-phospho-(deoxyribonucleotide)m = (deoxyribonucleotide)n+m + AMP + beta-nicotinamide D-nucleotide.. Its function is as follows. DNA ligase that catalyzes the formation of phosphodiester linkages between 5'-phosphoryl and 3'-hydroxyl groups in double-stranded DNA using NAD as a coenzyme and as the energy source for the reaction. It is essential for DNA replication and repair of damaged DNA. The sequence is that of DNA ligase from Staphylococcus aureus (strain bovine RF122 / ET3-1).